Consider the following 566-residue polypeptide: E3 ubiquitin-protein ligase RNF220 (566 aa).

Lys277 is covalently cross-linked (Glycyl lysine isopeptide (Lys-Gly) (interchain with G-Cter in SUMO2)). The segment at 277 to 297 is disordered; it reads KREGESPTASPHSSATDDLHH. Ser390 carries the post-translational modification Phosphoserine. Positions 485–513 form a coiled coil; that stretch reads EDSAVTTFEALKARVRELERQLSRGDRYK. The segment at 514–522 is required for targeting to the cytoplasm; that stretch reads CLICMDSYS. Residues 514–553 form an RING-type zinc finger; it reads CLICMDSYSMPLTSIQCWHVHCEECWLRTLGAKKLCPQCN.

Interacts with SIN3B. Interacts with CTNNB1 (via Armadillo repeats 2-8). Interacts with USP7 (via MATH domain). Auto-ubiquitinated; leads to proteasomal degradation. Ubiquitously expressed. Abundant in brain and spinal cord, particularly in the cerebellum and cerebral cortex. In fetal tissues expressed in the cerebellum, spinal cord and cortex.

It is found in the cytoplasm. It localises to the nucleus. The catalysed reaction is S-ubiquitinyl-[E2 ubiquitin-conjugating enzyme]-L-cysteine + [acceptor protein]-L-lysine = [E2 ubiquitin-conjugating enzyme]-L-cysteine + N(6)-ubiquitinyl-[acceptor protein]-L-lysine.. Its pathway is protein modification; protein ubiquitination. In terms of biological role, E3 ubiquitin-protein ligase that promotes the ubiquitination and proteasomal degradation of SIN3B. Independently of its E3 ligase activity, acts as a CTNNB1 stabilizer through USP7-mediated deubiquitination of CTNNB1 promoting Wnt signaling. Plays a critical role in the regulation of nuclear lamina. The protein is E3 ubiquitin-protein ligase RNF220 (RNF220) of Homo sapiens (Human).